We begin with the raw amino-acid sequence, 193 residues long: Probable nicotinate-nucleotide adenylyltransferase (193 aa).

It belongs to the NadD family.

The enzyme catalyses nicotinate beta-D-ribonucleotide + ATP + H(+) = deamido-NAD(+) + diphosphate. The protein operates within cofactor biosynthesis; NAD(+) biosynthesis; deamido-NAD(+) from nicotinate D-ribonucleotide: step 1/1. Catalyzes the reversible adenylation of nicotinate mononucleotide (NaMN) to nicotinic acid adenine dinucleotide (NaAD). The sequence is that of Probable nicotinate-nucleotide adenylyltransferase from Borreliella afzelii (strain PKo) (Borrelia afzelii).